Consider the following 121-residue polypeptide: Putative SNURF-like protein (121 aa).

Belongs to the SNURF family.

This is Putative SNURF-like protein (SNURFL) from Homo sapiens (Human).